We begin with the raw amino-acid sequence, 439 residues long: MPLIIIAAGVALLLILMIGFKVNGFIALVLVAAVVGFAEGMDAQAVLHSIQNGIGSTLGGLAMILGFGAMLGKLISDTGAAQRIATTLIATFGKKRVQWALVITGLVVGLAMFFEVGFVLLLPLVFTIVASSGLPLLYVGVPMVAALSVTHCFLPPHPGPTAIATIFEANLGTTLLYGFIITIPTVIVAGPLFSKLLTRFEKAPPEGLFNPHLFSEEEMPSFWNSIFAAVIPVILMAIAAVCEITLPKTNTVRLFFEFVGNPAVALFIAIVIAIFTLGRRNGRTIEQIMDIIGDSIGAIAMIVFIIAGGGAFKQVLVDSGVGHYISHLMTGTTLSPLLMCWTVAALLRIALGSATVAAITTAGVVLPIINVTHADPALMVLATGAGSVIASHVNDPGFWLFKGYFNLTVGETLRTWTVMETLISIMGLLGVLAINAVLH.

Residues 1–11 lie on the Periplasmic side of the membrane; it reads MPLIIIAAGVA. The helical transmembrane segment at 12–34 threads the bilayer; it reads LLLILMIGFKVNGFIALVLVAAV. Residues 35–53 are Cytoplasmic-facing; the sequence is VGFAEGMDAQAVLHSIQNG. A helical membrane pass occupies residues 54 to 76; sequence IGSTLGGLAMILGFGAMLGKLIS. Topologically, residues 77–96 are periplasmic; sequence DTGAAQRIATTLIATFGKKR. A helical transmembrane segment spans residues 97–114; that stretch reads VQWALVITGLVVGLAMFF. Residues 115–118 lie on the Cytoplasmic side of the membrane; it reads EVGF. The chain crosses the membrane as a helical span at residues 119-141; sequence VLLLPLVFTIVASSGLPLLYVGV. Over 142–170 the chain is Periplasmic; sequence PMVAALSVTHCFLPPHPGPTAIATIFEAN. A helical transmembrane segment spans residues 171-193; that stretch reads LGTTLLYGFIITIPTVIVAGPLF. The Cytoplasmic portion of the chain corresponds to 194–218; sequence SKLLTRFEKAPPEGLFNPHLFSEEE. The helical transmembrane segment at 219–241 threads the bilayer; the sequence is MPSFWNSIFAAVIPVILMAIAAV. Residues 242–253 lie on the Periplasmic side of the membrane; it reads CEITLPKTNTVR. A helical membrane pass occupies residues 254–276; that stretch reads LFFEFVGNPAVALFIAIVIAIFT. The Cytoplasmic segment spans residues 277–290; sequence LGRRNGRTIEQIMD. The chain crosses the membrane as a helical span at residues 291 to 310; that stretch reads IIGDSIGAIAMIVFIIAGGG. Residues 311–322 are Periplasmic-facing; sequence AFKQVLVDSGVG. Residues 323-345 traverse the membrane as a helical segment; that stretch reads HYISHLMTGTTLSPLLMCWTVAA. Over 346–348 the chain is Cytoplasmic; it reads LLR. A helical transmembrane segment spans residues 349-371; sequence IALGSATVAAITTAGVVLPIINV. At 372 to 377 the chain is on the periplasmic side; sequence THADPA. Residues 378-400 traverse the membrane as a helical segment; sequence LMVLATGAGSVIASHVNDPGFWL. Over 401–414 the chain is Cytoplasmic; the sequence is FKGYFNLTVGETLR. A helical transmembrane segment spans residues 415–437; sequence TWTVMETLISIMGLLGVLAINAV. Residues 438–439 are Periplasmic-facing; the sequence is LH.

The protein belongs to the GntP permease family.

It localises to the cell inner membrane. It catalyses the reaction L-idonate(in) + H(+)(in) = L-idonate(out) + H(+)(out). The catalysed reaction is D-gluconate(in) + H(+)(in) = D-gluconate(out) + H(+)(out). The enzyme catalyses 5-dehydro-D-gluconate(in) + H(+)(in) = 5-dehydro-D-gluconate(out) + H(+)(out). The protein operates within carbohydrate acid metabolism; L-idonate degradation. Its function is as follows. Transporter which is probably involved in L-idonate metabolism. Transports L-idonate from the periplasm across the inner membrane. Can also transport D-gluconate and 5-keto-D-gluconate. It has been reported that gluconate uptake probably occurs via a proton-symport mechanism in E.coli. This is Gnt-II system L-idonate transporter from Escherichia coli (strain K12).